Here is an 89-residue protein sequence, read N- to C-terminus: Arminin 7519 (89 aa).

The signal sequence occupies residues 1–18 (MRSTFAVLFLALIALTYS). The propeptide occupies 19-59 (KNYQDVKEEIKNEVENEILRDLGEDDDELDDNAQEAVNDAR). At Ala86 the chain carries Alanine amide.

It belongs to the arminin family. Expressed in entodermal epithelium along the body column.

It is found in the secreted. It localises to the target cell membrane. Functionally, antimicrobial peptide with a broad-spectrum antimicrobial activity. Keeps its antibacterial activity under a wide range of salt concentrations that mimic physiological conditions of human blood, which is surprising, since Hydra is an obligate freshwater animal with nearly no salt tolerance. Does not affect red blood cells. The protein is Arminin 7519 of Hydra vulgaris (Hydra).